The chain runs to 377 residues: Acetyltransferase ple2 (377 aa).

Residues 1–27 form the signal peptide; sequence MKPFSPELLVLSFILLVLSCAIRPAKG. 4 consecutive transmembrane segments (helical) span residues 29–49, 56–76, 176–196, and 258–278; these read WILWVIIVALNTYLTMTTTGD, IANNLFVITLTATDYILLTDV, IAAWLLFTTNQVSILLTALSL, and PALYVQLYAAFFLSGVLHAIG.

The protein belongs to the wax synthase family.

It is found in the membrane. Its pathway is secondary metabolite biosynthesis; terpenoid biosynthesis. Functionally, acetyltransferase; part of the gene cluster that mediates the biosynthesis of pleuromutilin, a tricyclic diterpene showing antibacterial properties. The geranylgeranyl diphosphate (GGPP) synthase ple4 catalyzes the first step in pleuromutilin biosynthesis. GGPP is then substrate of the premutilin synthase (PS) ple3 to yield premutilin. Premutilin synthase is a bifunctional enzyme composed of the fusion of a class II diterpene cyclase (DTC) and a class I diterpene synthase (DTS), with the corresponding domains and active sites containing characteristic aspartate-rich motifs. GGPP is first converted to mutildienyl-diphosphate (MPP) at the class II DTC site. MPP is subsequently further cyclized at the class I DTS site, followed by a 1,5-hydride shift and addition of water prior to terminating deprotonation, to yield premutilin. The cytochrome P450 monooxygenases ple5 and ple6 hydroxylate premutilin at C-11 and C-3, respectively, producing 11-hydroxypremutilin and 3-hydroxypremutilin. The combination of the actions of both ple5 and ple6 leads to the production of 3,11-dihydroxypremutilin. The short chain dehydrogenase ple7 further converts 3,11-dihydroxypremutilin into mutilin. The acetyltransferase ple2 then acetylates mutilin to produce 14-O-acetylmutilin. Finally, the cytochrome P450 monooxygenase ple1 catalyzes hydroxylation on the alpha position of the acetyl side chain of 14-O-acetylmutilin to yield pleuromutilin. In Rhodocybe pseudopiperita (Clitopilus pseudopiperitus), this protein is Acetyltransferase ple2.